Reading from the N-terminus, the 265-residue chain is Serine protease ami (265 aa).

A signal peptide spans 1 to 21; that stretch reads MNVSWALLAVVLVLTVATYEC. N-linked (GlcNAc...) asparagine glycosylation occurs at N2. Residues 22–26 constitute a propeptide, activation peptide; it reads RPRGR. The Peptidase S1 domain occupies 27-254; that stretch reads ILGGQDSKAE…YKSWIMESMY (228 aa). C52 and C68 are disulfide-bonded. The active-site Charge relay system is H67. N-linked (GlcNAc...) asparagine glycans are attached at residues N71, N74, and N108. D115 serves as the catalytic Charge relay system. Disulfide bonds link C149–C215, C180–C196, and C205–C230. S209 (charge relay system) is an active-site residue. N-linked (GlcNAc...) asparagine glycosylation is present at N255.

The protein belongs to the peptidase S1 family.

The protein localises to the secreted. In terms of biological role, probable serine protease. This is Serine protease ami from Xenopus tropicalis (Western clawed frog).